The primary structure comprises 726 residues: Catalase-peroxidase 1 (726 aa).

The disordered stretch occupies residues 1-33; sequence MSTSDDIHNTTATGKCPFHQGGHDQSAGAGTTT. The tryptophyl-tyrosyl-methioninium (Trp-Tyr) (with M-252) cross-link spans 105-226; sequence WHGAGTYRSI…LGATEMGLIY (122 aa). Catalysis depends on H106, which acts as the Proton acceptor. Positions 226–252 form a cross-link, tryptophyl-tyrosyl-methioninium (Tyr-Met) (with W-105); that stretch reads YVNPEGPDHSGEPLSAAAAIRATFGNM. H267 serves as a coordination point for heme b.

Belongs to the peroxidase family. Peroxidase/catalase subfamily. In terms of assembly, homodimer or homotetramer. Requires heme b as cofactor. Post-translationally, formation of the three residue Trp-Tyr-Met cross-link is important for the catalase, but not the peroxidase activity of the enzyme.

The catalysed reaction is H2O2 + AH2 = A + 2 H2O. The enzyme catalyses 2 H2O2 = O2 + 2 H2O. Functionally, bifunctional enzyme with both catalase and broad-spectrum peroxidase activity. This chain is Catalase-peroxidase 1, found in Escherichia coli O157:H7.